Here is a 356-residue protein sequence, read N- to C-terminus: 3-dehydroquinate synthase (356 aa).

NAD(+) is bound by residues 106–110, 130–131, lysine 143, lysine 152, and 170–173; these read GVVGD, TS, and FLKT. Residues glutamate 185, histidine 246, and histidine 263 each contribute to the Zn(2+) site.

This sequence belongs to the sugar phosphate cyclases superfamily. Dehydroquinate synthase family. It depends on NAD(+) as a cofactor. Requires Co(2+) as cofactor. Zn(2+) serves as cofactor.

The protein localises to the cytoplasm. It catalyses the reaction 7-phospho-2-dehydro-3-deoxy-D-arabino-heptonate = 3-dehydroquinate + phosphate. Its pathway is metabolic intermediate biosynthesis; chorismate biosynthesis; chorismate from D-erythrose 4-phosphate and phosphoenolpyruvate: step 2/7. Functionally, catalyzes the conversion of 3-deoxy-D-arabino-heptulosonate 7-phosphate (DAHP) to dehydroquinate (DHQ). The protein is 3-dehydroquinate synthase of Clostridium acetobutylicum (strain ATCC 824 / DSM 792 / JCM 1419 / IAM 19013 / LMG 5710 / NBRC 13948 / NRRL B-527 / VKM B-1787 / 2291 / W).